A 122-amino-acid chain; its full sequence is Ribosomal protein eL22-like (122 aa).

Serine 112, serine 118, and serine 120 each carry phosphoserine.

This sequence belongs to the eukaryotic ribosomal protein eL22 family.

In Homo sapiens (Human), this protein is Ribosomal protein eL22-like (RPL22L1).